We begin with the raw amino-acid sequence, 219 residues long: Transmembrane protein 179B (219 aa).

4 helical membrane-spanning segments follow: residues Val-9 to Thr-29, Phe-65 to Val-85, Ile-98 to Ala-118, and Leu-162 to Leu-182. A Phosphoserine modification is found at Ser-206.

Belongs to the TMEM179 family.

It localises to the membrane. This chain is Transmembrane protein 179B (Tmem179b), found in Mus musculus (Mouse).